Reading from the N-terminus, the 500-residue chain is Lysine--tRNA ligase (500 aa).

Residues E410 and E417 each coordinate Mg(2+).

This sequence belongs to the class-II aminoacyl-tRNA synthetase family. Homodimer. It depends on Mg(2+) as a cofactor.

The protein resides in the cytoplasm. The catalysed reaction is tRNA(Lys) + L-lysine + ATP = L-lysyl-tRNA(Lys) + AMP + diphosphate. This chain is Lysine--tRNA ligase, found in Shewanella loihica (strain ATCC BAA-1088 / PV-4).